The chain runs to 83 residues: RNA-binding protein Hfq (83 aa).

Residues 11–71 (DVFLNYIRKN…ISTIMPASPV (61 aa)) enclose the Sm domain.

Belongs to the Hfq family. In terms of assembly, homohexamer.

RNA chaperone that binds small regulatory RNA (sRNAs) and mRNAs to facilitate mRNA translational regulation in response to envelope stress, environmental stress and changes in metabolite concentrations. Also binds with high specificity to tRNAs. The polypeptide is RNA-binding protein Hfq (Rhodospirillum rubrum (strain ATCC 11170 / ATH 1.1.1 / DSM 467 / LMG 4362 / NCIMB 8255 / S1)).